The following is a 511-amino-acid chain: Maturase K (511 aa).

This sequence belongs to the intron maturase 2 family. MatK subfamily.

It localises to the plastid. The protein localises to the chloroplast. In terms of biological role, usually encoded in the trnK tRNA gene intron. Probably assists in splicing its own and other chloroplast group II introns. The sequence is that of Maturase K from Chloranthus spicatus (Chulantree).